Consider the following 301-residue polypeptide: Mas-related G-protein coupled receptor member A6 (301 aa).

Residues 1–15 (MHRSISIRILITNLM) lie on the Extracellular side of the membrane. Residues 16–36 (IVILGLVGLTGNAIVFWLLLF) form a helical membrane-spanning segment. Over 37–42 (RLRRNA) the chain is Cytoplasmic. Residues 43-63 (FSIYILNLALADFLFLLCHII) form a helical membrane-spanning segment. Residues 64–77 (ASTEHILTFSSPNS) lie on the Extracellular side of the membrane. The chain crosses the membrane as a helical span at residues 78–98 (IFINCLYTFRVLLYIAGLNML). The Cytoplasmic portion of the chain corresponds to 99-128 (SAISIERCLSVMCPIWYRCHRPEHTSTVMC). Residues 129-149 (AMIWVLSLLLCILYRYFCGFL) traverse the membrane as a helical segment. Over 150-163 (DTKYEDDYGCLAMN) the chain is Extracellular. Residues 164-184 (FLTTAYLMFLFVVLCVSSLAL) form a helical membrane-spanning segment. The Cytoplasmic segment spans residues 185–203 (LARLFCGAGRMKLTRLYVT). A helical membrane pass occupies residues 204-224 (ITLTLLVFLLCGLPCGFYWFL). Residues 225-240 (LSKIKNVFSVFEFSLY) lie on the Extracellular side of the membrane. A helical transmembrane segment spans residues 241–261 (LTSVVLTAINSCANPIIYFFV). Residues 262 to 301 (GSFRHRLKHQTLKMVLQSALQDTPETPENMVEMSRNKAEL) are Cytoplasmic-facing.

It belongs to the G-protein coupled receptor 1 family. Mas subfamily. Expressed in a subset of sensory neurons that includes nociceptors. Expressed in the subclass of non-peptidergic sensory neurons that are IB4(+) and VR1(-).

It is found in the cell membrane. Functionally, orphan receptor. May be a receptor for RFamide-family neuropeptides such as NPFF and NPAF, which are analgesic in vivo. May regulate nociceptor function and/or development, including the sensation or modulation of pain. The polypeptide is Mas-related G-protein coupled receptor member A6 (Mrgpra6) (Mus musculus (Mouse)).